Here is a 1026-residue protein sequence, read N- to C-terminus: Phosphoenolpyruvate carboxylase (1026 aa).

Residues H199 and K672 contribute to the active site.

This sequence belongs to the PEPCase type 1 family. It depends on Mg(2+) as a cofactor.

The enzyme catalyses oxaloacetate + phosphate = phosphoenolpyruvate + hydrogencarbonate. Its function is as follows. Forms oxaloacetate, a four-carbon dicarboxylic acid source for the tricarboxylic acid cycle. The protein is Phosphoenolpyruvate carboxylase (ppc) of Nostoc sp. (strain PCC 7120 / SAG 25.82 / UTEX 2576).